Here is a 319-residue protein sequence, read N- to C-terminus: 4-hydroxy-3-methylbut-2-enyl diphosphate reductase (319 aa).

Cys17 provides a ligand contact to [4Fe-4S] cluster. His46 and His79 together coordinate (2E)-4-hydroxy-3-methylbut-2-enyl diphosphate. Residues His46 and His79 each coordinate dimethylallyl diphosphate. Isopentenyl diphosphate is bound by residues His46 and His79. [4Fe-4S] cluster is bound at residue Cys101. His129 contacts (2E)-4-hydroxy-3-methylbut-2-enyl diphosphate. His129 provides a ligand contact to dimethylallyl diphosphate. Residue His129 participates in isopentenyl diphosphate binding. The Proton donor role is filled by Glu131. Thr170 contacts (2E)-4-hydroxy-3-methylbut-2-enyl diphosphate. Cys200 serves as a coordination point for [4Fe-4S] cluster. Positions 228, 229, 230, and 273 each coordinate (2E)-4-hydroxy-3-methylbut-2-enyl diphosphate. Residues Ser228, Ser229, Asn230, and Ser273 each coordinate dimethylallyl diphosphate. The isopentenyl diphosphate site is built by Ser228, Ser229, Asn230, and Ser273.

This sequence belongs to the IspH family. It depends on [4Fe-4S] cluster as a cofactor.

It catalyses the reaction isopentenyl diphosphate + 2 oxidized [2Fe-2S]-[ferredoxin] + H2O = (2E)-4-hydroxy-3-methylbut-2-enyl diphosphate + 2 reduced [2Fe-2S]-[ferredoxin] + 2 H(+). The catalysed reaction is dimethylallyl diphosphate + 2 oxidized [2Fe-2S]-[ferredoxin] + H2O = (2E)-4-hydroxy-3-methylbut-2-enyl diphosphate + 2 reduced [2Fe-2S]-[ferredoxin] + 2 H(+). It participates in isoprenoid biosynthesis; dimethylallyl diphosphate biosynthesis; dimethylallyl diphosphate from (2E)-4-hydroxy-3-methylbutenyl diphosphate: step 1/1. The protein operates within isoprenoid biosynthesis; isopentenyl diphosphate biosynthesis via DXP pathway; isopentenyl diphosphate from 1-deoxy-D-xylulose 5-phosphate: step 6/6. Functionally, catalyzes the conversion of 1-hydroxy-2-methyl-2-(E)-butenyl 4-diphosphate (HMBPP) into a mixture of isopentenyl diphosphate (IPP) and dimethylallyl diphosphate (DMAPP). Acts in the terminal step of the DOXP/MEP pathway for isoprenoid precursor biosynthesis. In Cereibacter sphaeroides (strain ATCC 17025 / ATH 2.4.3) (Rhodobacter sphaeroides), this protein is 4-hydroxy-3-methylbut-2-enyl diphosphate reductase.